Reading from the N-terminus, the 470-residue chain is ATP synthase subunit beta (470 aa).

157-164 (GGAGVGKT) serves as a coordination point for ATP.

Belongs to the ATPase alpha/beta chains family. As to quaternary structure, F-type ATPases have 2 components, CF(1) - the catalytic core - and CF(0) - the membrane proton channel. CF(1) has five subunits: alpha(3), beta(3), gamma(1), delta(1), epsilon(1). CF(0) has three main subunits: a(1), b(2) and c(9-12). The alpha and beta chains form an alternating ring which encloses part of the gamma chain. CF(1) is attached to CF(0) by a central stalk formed by the gamma and epsilon chains, while a peripheral stalk is formed by the delta and b chains.

The protein localises to the cell inner membrane. The enzyme catalyses ATP + H2O + 4 H(+)(in) = ADP + phosphate + 5 H(+)(out). Produces ATP from ADP in the presence of a proton gradient across the membrane. The catalytic sites are hosted primarily by the beta subunits. This is ATP synthase subunit beta from Geotalea uraniireducens (strain Rf4) (Geobacter uraniireducens).